Here is a 303-residue protein sequence, read N- to C-terminus: Leukocyte immunoglobulin-like receptor subfamily B member 4B (303 aa).

The N-terminal stretch at Met1–Ala23 is a signal peptide. Over Gly24–Lys238 the chain is Extracellular. 2 consecutive Ig-like C2-type domains span residues Tyr42 to Asn123 and Pro124 to Asn212. A disulfide bridge connects residues Cys49 and Cys98. 3 N-linked (GlcNAc...) asparagine glycosylation sites follow: Asn79, Asn133, and Asn191. Cysteines 144 and 196 form a disulfide. Residues Ile239–Ile260 form a helical membrane-spanning segment. Topologically, residues Gly261–Arg303 are cytoplasmic. Polar residues predominate over residues Lys275–Asn292. A disordered region spans residues Lys275–Arg303.

Monomer and homodimer. Expressed on mast cells (at protein level). Also expressed at much lower levels on natural killer cells (at protein level).

It localises to the cell membrane. Plays a role in mast cell activation. This is Leukocyte immunoglobulin-like receptor subfamily B member 4B from Mus musculus (Mouse).